The sequence spans 261 residues: MVVTIPQLQQWKRSGRAIAVLTAWDWLWASLLDQAGVDLILVGDSLAMVALGHKNTLPLSLDEMLHHTRAVCRGVQRALVVCDLPFGSYQESPQQAVRSASRVLKETPAQAVKLEGGYPAMVETVTHLVRAGIPVLGHVGLTPQSVHQYGGYPQQGKSVEAAERILSEAIALEQAGAFAIILEHIPADLGLTITQKLSIPTIGIGAGPHCDGQVLVTADALGLSERQPPFAKAYANLRETILQAVQEYCNEVQTHQFPGSG.

Mg(2+) is bound by residues Asp-44 and Asp-83. 3-methyl-2-oxobutanoate is bound by residues 44-45 (DS), Asp-83, and Lys-113. Glu-115 provides a ligand contact to Mg(2+). The Proton acceptor role is filled by Glu-183.

Belongs to the PanB family. In terms of assembly, homodecamer; pentamer of dimers. Mg(2+) is required as a cofactor.

The protein resides in the cytoplasm. It carries out the reaction 3-methyl-2-oxobutanoate + (6R)-5,10-methylene-5,6,7,8-tetrahydrofolate + H2O = 2-dehydropantoate + (6S)-5,6,7,8-tetrahydrofolate. The protein operates within cofactor biosynthesis; (R)-pantothenate biosynthesis; (R)-pantoate from 3-methyl-2-oxobutanoate: step 1/2. Functionally, catalyzes the reversible reaction in which hydroxymethyl group from 5,10-methylenetetrahydrofolate is transferred onto alpha-ketoisovalerate to form ketopantoate. The sequence is that of 3-methyl-2-oxobutanoate hydroxymethyltransferase from Cyanothece sp. (strain PCC 7425 / ATCC 29141).